We begin with the raw amino-acid sequence, 104 residues long: MAAKIRKGDKVIVLSGRDKGRTGEVFEVRPDAGKALVRGINVVKRHQKQTQTQEGGIISKEAPIDLSNIAIVGKDGKPTRVGFKILADGKKVRVAKRSGAEIDG.

It belongs to the universal ribosomal protein uL24 family. In terms of assembly, part of the 50S ribosomal subunit. A methylated and unmethylated form are thought to exist.

In terms of biological role, one of two assembly initiator proteins, it binds directly to the 5'-end of the 23S rRNA, where it nucleates assembly of the 50S subunit. Its function is as follows. One of the proteins that surrounds the polypeptide exit tunnel on the outside of the subunit. This Rhodopseudomonas palustris (strain ATCC BAA-98 / CGA009) protein is Large ribosomal subunit protein uL24.